The primary structure comprises 354 residues: MSKFWSSLAKQVDPYIPGEQLNDDTIIKLNTNENPYPPSNQVIQAIDEASKNLRLYPSPTVDELRSEIGEMYGLSQDHIFIGNGSDEVLAFSFMSFFEPGNRIKYPEITYSFYPVYAKLFNISTDVIPLNDDYTIPVEHFYNSEGGVIFPNPNAPTGIFLEIDQIKRILENNPNQVVIIDEAYIDFALESAVTLVEAFPNLLVIQTMSKSRSLAGLRIGFAIGNPELIIGLERIKNSFNSYTVDRLAIAGAIEAIRDKDYFLQTTTKIIESRSYLKEQLETRHFDILPSQANFLLVSHKEVNAEVLYQELKKQGILVRYFQKPGLENFLRISIGTPAQIEKLLKKIDHIIKPSP.

K209 is subject to N6-(pyridoxal phosphate)lysine.

The protein belongs to the class-II pyridoxal-phosphate-dependent aminotransferase family. Histidinol-phosphate aminotransferase subfamily. In terms of assembly, homodimer. Pyridoxal 5'-phosphate serves as cofactor.

It carries out the reaction L-histidinol phosphate + 2-oxoglutarate = 3-(imidazol-4-yl)-2-oxopropyl phosphate + L-glutamate. It participates in amino-acid biosynthesis; L-histidine biosynthesis; L-histidine from 5-phospho-alpha-D-ribose 1-diphosphate: step 7/9. This chain is Histidinol-phosphate aminotransferase 1 (hisC1), found in Oceanobacillus iheyensis (strain DSM 14371 / CIP 107618 / JCM 11309 / KCTC 3954 / HTE831).